The sequence spans 227 residues: Cytochrome c oxidase subunit 2 (227 aa).

Topologically, residues 1-14 are mitochondrial intermembrane; sequence MAYPFQLGLQDATS. The chain crosses the membrane as a helical span at residues 15–45; that stretch reads PIMEELLHFHDHTLMIVFLISSLVLYIISLM. Topologically, residues 46–59 are mitochondrial matrix; the sequence is LTTKLTHTSTMDAQ. The helical transmembrane segment at 60 to 87 threads the bilayer; the sequence is EVETVWTILPAIILISIALPSLRILYMM. The Mitochondrial intermembrane segment spans residues 88 to 227; it reads DEINNPSLTV…YFEAWSTLMM (140 aa). His-161, Cys-196, Glu-198, Cys-200, His-204, and Met-207 together coordinate Cu cation. Position 198 (Glu-198) interacts with Mg(2+). The residue at position 218 (Tyr-218) is a Phosphotyrosine.

It belongs to the cytochrome c oxidase subunit 2 family. In terms of assembly, component of the cytochrome c oxidase (complex IV, CIV), a multisubunit enzyme composed of 14 subunits. The complex is composed of a catalytic core of 3 subunits MT-CO1, MT-CO2 and MT-CO3, encoded in the mitochondrial DNA, and 11 supernumerary subunits COX4I, COX5A, COX5B, COX6A, COX6B, COX6C, COX7A, COX7B, COX7C, COX8 and NDUFA4, which are encoded in the nuclear genome. The complex exists as a monomer or a dimer and forms supercomplexes (SCs) in the inner mitochondrial membrane with NADH-ubiquinone oxidoreductase (complex I, CI) and ubiquinol-cytochrome c oxidoreductase (cytochrome b-c1 complex, complex III, CIII), resulting in different assemblies (supercomplex SCI(1)III(2)IV(1) and megacomplex MCI(2)III(2)IV(2)). Found in a complex with TMEM177, COA6, COX18, COX20, SCO1 and SCO2. Interacts with TMEM177 in a COX20-dependent manner. Interacts with COX20. Interacts with COX16. Cu cation is required as a cofactor.

It is found in the mitochondrion inner membrane. The catalysed reaction is 4 Fe(II)-[cytochrome c] + O2 + 8 H(+)(in) = 4 Fe(III)-[cytochrome c] + 2 H2O + 4 H(+)(out). Component of the cytochrome c oxidase, the last enzyme in the mitochondrial electron transport chain which drives oxidative phosphorylation. The respiratory chain contains 3 multisubunit complexes succinate dehydrogenase (complex II, CII), ubiquinol-cytochrome c oxidoreductase (cytochrome b-c1 complex, complex III, CIII) and cytochrome c oxidase (complex IV, CIV), that cooperate to transfer electrons derived from NADH and succinate to molecular oxygen, creating an electrochemical gradient over the inner membrane that drives transmembrane transport and the ATP synthase. Cytochrome c oxidase is the component of the respiratory chain that catalyzes the reduction of oxygen to water. Electrons originating from reduced cytochrome c in the intermembrane space (IMS) are transferred via the dinuclear copper A center (CU(A)) of subunit 2 and heme A of subunit 1 to the active site in subunit 1, a binuclear center (BNC) formed by heme A3 and copper B (CU(B)). The BNC reduces molecular oxygen to 2 water molecules using 4 electrons from cytochrome c in the IMS and 4 protons from the mitochondrial matrix. The sequence is that of Cytochrome c oxidase subunit 2 (MT-CO2) from Lycaon pictus (African wild dog).